A 380-amino-acid polypeptide reads, in one-letter code: MRYTSLFTAVTAALASTAAAVGVSGAAEGFAKGVTGGGNASPVYPKTNDELVSYLGDSQARVIVLTKTFDFRGTEGTTSGTGCAPWGTNAKCQLAINQNSWCDNYQPNAPKVSVSYDNAGVLGITVNSNKSLIGQGSAGVIKGKGLRIVSGAKNVIIQNIAITDINPKYVWGGDAITINNADLVWIDHVTTARIGRQHIVLGTQADNRITISNCYIDGVTDYSATCNGYHYWGIYLDGSNDMVTMKGNYIYHTSGRSPKVQGNTLLHAVNNYWYDNAGHAFEIGSGAYVVAEGNVFQNVKAVAESPISGKLFSSPDASTNKVCSSYLGHTCQINGFGSSGAFSQADTDILSKFKGKNIASAAAYNTVVSSVTANAGNGKL.

A signal peptide spans M1 to A20. Cystine bridges form between C83–C102 and C92–C226. N129 is a glycosylation site (N-linked (GlcNAc...) asparagine). R256 is an active-site residue. C323 and C331 form a disulfide bridge.

The protein belongs to the polysaccharide lyase 1 family.

It localises to the secreted. The catalysed reaction is Eliminative cleavage of (1-&gt;4)-alpha-D-galacturonan methyl ester to give oligosaccharides with 4-deoxy-6-O-methyl-alpha-D-galact-4-enuronosyl groups at their non-reducing ends.. Pectinolytic enzymes consist of four classes of enzymes: pectin lyase, polygalacturonase, pectin methylesterase and rhamnogalacturonase. Among pectinolytic enzymes, pectin lyase is the most important in depolymerization of pectin, since it cleaves internal glycosidic bonds of highly methylated pectins. This chain is Probable pectin lyase A (pelA), found in Aspergillus fumigatus (strain ATCC MYA-4609 / CBS 101355 / FGSC A1100 / Af293) (Neosartorya fumigata).